The following is a 461-amino-acid chain: Tumor necrosis factor receptor superfamily member 1A (461 aa).

Residues 1–29 (MGLPIVPGLLLSLVLLALLMGIHPSGVTG) form the signal peptide. The Extracellular portion of the chain corresponds to 30-211 (LVPSLGDREK…VTNPQDSGTA (182 aa)). TNFR-Cys repeat units lie at residues 43 to 82 (LCPQ…TVCE), 83 to 125 (VCDK…DTVC), 126 to 166 (GCKK…NTVC), and 167 to 196 (NCHA…KLCL). Disulfide bonds link cysteine 44/cysteine 58, cysteine 59/cysteine 72, cysteine 62/cysteine 81, cysteine 84/cysteine 99, cysteine 102/cysteine 117, cysteine 105/cysteine 125, cysteine 127/cysteine 143, cysteine 146/cysteine 158, cysteine 149/cysteine 166, cysteine 168/cysteine 179, cysteine 182/cysteine 195, and cysteine 185/cysteine 191. The N-linked (GlcNAc...) asparagine glycan is linked to asparagine 54. Asparagine 151 carries an N-linked (GlcNAc...) asparagine glycan. The N-linked (GlcNAc...) asparagine glycan is linked to asparagine 201. The helical transmembrane segment at 212 to 234 (VLLPLVIFLGLCLLFFICISLLC) threads the bilayer. Topologically, residues 235–461 (RYPQWRPRVY…AHSSTTHLPR (227 aa)) are cytoplasmic. The segment at 344–354 (VRKWEDVVAAQ) is N-SMase activation domain (NSD). In terms of domain architecture, Death spans 363–448 (PAMLYAVVDG…GCLENIRETL (86 aa)).

As to quaternary structure, binding of TNF to the extracellular domain leads to homotrimerization. The aggregated death domains provide a novel molecular interface that interacts specifically with the death domain of TRADD. Various TRADD-interacting proteins such as TRAFS, RIPK1 and possibly FADD, are recruited to the complex by their association with TRADD. This complex activates at least two distinct signaling cascades, apoptosis and NF-kappa-B signaling. Interacts with BAG4, BABAM2, FEM1B, GRB2, SQSTM1 and TRPC4AP. Interacts with DAB2IP. Interacts directly with NOL3 (via CARD domain); inhibits TNF-signaling pathway. Interacts with SH3RF2, TRADD and RIPK1. SH3RF2 facilitates the recruitment of RIPK1 and TRADD to TNFRSF1A in a TNF-alpha-dependent process. Interacts with PGLYRP1; this interaction is important for cell death induction. Interacts (via death domain) with MADD (via death domain).

The protein resides in the cell membrane. It is found in the golgi apparatus membrane. Its function is as follows. Receptor for TNFSF2/TNF-alpha and homotrimeric TNFSF1/lymphotoxin-alpha. The adapter molecule FADD recruits caspase-8 to the activated receptor. The resulting death-inducing signaling complex (DISC) performs caspase-8 proteolytic activation which initiates the subsequent cascade of caspases (aspartate-specific cysteine proteases) mediating apoptosis. This chain is Tumor necrosis factor receptor superfamily member 1A (Tnfrsf1a), found in Rattus norvegicus (Rat).